Reading from the N-terminus, the 687-residue chain is MCASLNEVKKNETYGVSQKGYNDNFSESEGVLHGSKSMPTSMKNMLQSPTMVNMCDILQNKEAANDEKPVIPTTDTATAGTGTEDISSTQSEETDQNSHLIASEILEGTFKDISYKEYANFLGNDNNNQVLTEFVKLLSPLPSSLLETLFNLSKSIYFIAEAQNIDRILECLSKEWIACHPNTHWKSGYKSCHIVLFSLLILNSDLHNNFQVDHKKIKFSMVAFINNTLRALREENEYEELKIYSREHLIIEELSEYYKTLNETPLPLCTESRTSINTSDNQSSLKRFSTLGSREFSTSNLRSVNSNSTTLYSRDGQVSVREMSAKSNKNFHNNHPMDALYLKESFDDGLITENGSSWFMDDLILISKKSLPRKYSKRDKDQVAAPKMTSKRNKSFFGWLKPSKTTTLIEHTSRRTSLSYLNKDSEWERVKIQVKEGRIFIFKIKPDVKDIIQSSETDSATIDYFKDISSSYFAYSLLEAEAHVVQDNIIIGSGAMKSNVCNKNTKRKSGNFTVSFPENINGPKLVLEFQTRSVEEAHKFMDCINFWAGRISPVPLTQFEAVSNAEYGWSDKILTEHASLNLKNIVVSEWKPLLGLELLYEDAKDVEMVELKERLKELMNFTRQLGIWIDKHNEIKDKLVEIWSFDDNYFEAVMNNWNSRYLYMNNQYKKRLSYLKALQKAMGSVQF.

The SEC7 domain maps to 57 to 264; that stretch reads ILQNKEAAND…SEYYKTLNET (208 aa). The tract at residues 63–97 is disordered; it reads AANDEKPVIPTTDTATAGTGTEDISSTQSEETDQN. A compositionally biased stretch (low complexity) spans 73-83; that stretch reads TTDTATAGTGT. The residue at position 290 (T290) is a Phosphothreonine. Phosphoserine is present on residues S293 and S299. The 140-residue stretch at 412 to 551 folds into the PH domain; the sequence is TSRRTSLSYL…DCINFWAGRI (140 aa).

This sequence belongs to the YEL1 family.

It localises to the cytoplasm. Its subcellular location is the cell membrane. It is found in the bud neck. The protein localises to the bud tip. Functionally, guanine nucleotide exchange factor for ARF3 required for localization of ARF3 to the bud neck and tip and involved in actin patch polarization. In Saccharomyces cerevisiae (strain JAY291) (Baker's yeast), this protein is Guanine-nucleotide exchange factor YEL1 (YEL1).